A 116-amino-acid chain; its full sequence is Aspartate 1-decarboxylase (116 aa).

Ser-25 functions as the Schiff-base intermediate with substrate; via pyruvic acid in the catalytic mechanism. Ser-25 is modified (pyruvic acid (Ser)). Residue Thr-57 coordinates substrate. Tyr-58 functions as the Proton donor in the catalytic mechanism. 73–75 (GPA) serves as a coordination point for substrate.

It belongs to the PanD family. In terms of assembly, heterooctamer of four alpha and four beta subunits. The cofactor is pyruvate. Is synthesized initially as an inactive proenzyme, which is activated by self-cleavage at a specific serine bond to produce a beta-subunit with a hydroxyl group at its C-terminus and an alpha-subunit with a pyruvoyl group at its N-terminus.

It localises to the cytoplasm. The catalysed reaction is L-aspartate + H(+) = beta-alanine + CO2. It participates in cofactor biosynthesis; (R)-pantothenate biosynthesis; beta-alanine from L-aspartate: step 1/1. In terms of biological role, catalyzes the pyruvoyl-dependent decarboxylation of aspartate to produce beta-alanine. This Flavobacterium psychrophilum (strain ATCC 49511 / DSM 21280 / CIP 103535 / JIP02/86) protein is Aspartate 1-decarboxylase.